A 445-amino-acid chain; its full sequence is UPF0210 protein SMU_73 (445 aa).

It belongs to the UPF0210 family. Homodimer.

This chain is UPF0210 protein SMU_73, found in Streptococcus mutans serotype c (strain ATCC 700610 / UA159).